Consider the following 479-residue polypeptide: MNTILAQQIANEGGVEAWMIAQQHKSLLRFLTCGSVDDGKSTLIGRLLHDTLQIYEDQLSSLHNDSKRHGTQGEKLDLALLVDGLQAEREQGITIDVAYRYFSTEKRKFIIADTPGHEQYTRNMATGASTCDLAILLIDARKGVLDQTRRHSFISTLLGIKHLVVAINKMDLVDYREETFARIREDYLTFAEQLPGDLDIRFVPLSALEGDNVAAQSANMRWYSGPTLLEVLETVDIQRAVDRQPMRFPVQYVNRPNLDFRGYAGTLASGSVKVGERIKVLPSGVESSVARIVTFDGDKEEACAGEAITLVLNDDIDISRGDLLLAANETLAPARHAAIDVVWMAEQPLAPGQSYDVKLAGKKTRARIEAIRYQIDINNLTQRDVESLPLNGIGLVEMTFDEPLALDIYQQNPVTGGLIFIDRLSNVTVGAGMVRELDERGATPSVEYSAFELELNALVRRHFPHWDARDLLGDKHGAA.

A tr-type G domain is found at 25-239; that stretch reads KSLLRFLTCG…EVLETVDIQR (215 aa). Positions 34–41 are G1; it reads GSVDDGKS. 34–41 lines the GTP pocket; it reads GSVDDGKS. The tract at residues 92 to 96 is G2; the sequence is GITID. A G3 region spans residues 113-116; the sequence is DTPG. GTP contacts are provided by residues 113–117 and 168–171; these read DTPGH and NKMD. The segment at 168–171 is G4; sequence NKMD. Residues 206-208 form a G5 region; the sequence is SAL.

This sequence belongs to the TRAFAC class translation factor GTPase superfamily. Classic translation factor GTPase family. CysN/NodQ subfamily. Heterodimer composed of CysD, the smaller subunit, and CysN.

It carries out the reaction sulfate + ATP + H(+) = adenosine 5'-phosphosulfate + diphosphate. Its pathway is sulfur metabolism; hydrogen sulfide biosynthesis; sulfite from sulfate: step 1/3. Its function is as follows. With CysD forms the ATP sulfurylase (ATPS) that catalyzes the adenylation of sulfate producing adenosine 5'-phosphosulfate (APS) and diphosphate, the first enzymatic step in sulfur assimilation pathway. APS synthesis involves the formation of a high-energy phosphoric-sulfuric acid anhydride bond driven by GTP hydrolysis by CysN coupled to ATP hydrolysis by CysD. In Salmonella paratyphi B (strain ATCC BAA-1250 / SPB7), this protein is Sulfate adenylyltransferase subunit 1.